We begin with the raw amino-acid sequence, 1401 residues long: DNA-directed RNA polymerase subunit beta' (1401 aa).

Zn(2+) is bound by residues Cys70, Cys72, Cys85, and Cys88. Residues Asp460, Asp462, and Asp464 each coordinate Mg(2+). Zn(2+) is bound by residues Cys808, Cys882, Cys889, and Cys892.

It belongs to the RNA polymerase beta' chain family. The RNAP catalytic core consists of 2 alpha, 1 beta, 1 beta' and 1 omega subunit. When a sigma factor is associated with the core the holoenzyme is formed, which can initiate transcription. It depends on Mg(2+) as a cofactor. Zn(2+) is required as a cofactor.

The enzyme catalyses RNA(n) + a ribonucleoside 5'-triphosphate = RNA(n+1) + diphosphate. Its function is as follows. DNA-dependent RNA polymerase catalyzes the transcription of DNA into RNA using the four ribonucleoside triphosphates as substrates. This Legionella pneumophila (strain Lens) protein is DNA-directed RNA polymerase subunit beta'.